The chain runs to 98 residues: Citrate lyase acyl carrier protein (98 aa).

At Ser14 the chain carries O-(phosphoribosyl dephospho-coenzyme A)serine.

The protein belongs to the CitD family. Oligomer with a subunit composition of (alpha,beta,gamma)6.

It localises to the cytoplasm. In terms of biological role, covalent carrier of the coenzyme of citrate lyase. The sequence is that of Citrate lyase acyl carrier protein from Vibrio cholerae serotype O1 (strain ATCC 39315 / El Tor Inaba N16961).